A 689-amino-acid chain; its full sequence is Solute carrier organic anion transporter family member 1B2 (689 aa).

Residues 1-26 (MDQTQHPSKAAQPLRSEKTRHCDGFR) lie on the Cytoplasmic side of the membrane. Residues 27–46 (IFLAALSFSYICKALGGVIM) form a helical membrane-spanning segment. Residues 47–65 (KSSITQIERRFDIPSSISG) are Extracellular-facing. The helical transmembrane segment at 66 to 86 (LIDGGFEIGNLLVIVFVSYFG) threads the bilayer. Over 87-92 (SKLHRP) the chain is Cytoplasmic. The chain crosses the membrane as a helical span at residues 93–117 (KLIGTGCFIMGIGSILTALPHFFMG). Topologically, residues 118–163 (YYRYATENDISSLHNSTLTCLVNQTTSLTGTSPEIMEKGCEKGSNS) are extracellular. Asparagine 132 and asparagine 140 each carry an N-linked (GlcNAc...) asparagine glycan. A helical transmembrane segment spans residues 164–192 (YTWIYVLMGNMLRGIGETPIVPLGVSYID). The Cytoplasmic segment spans residues 193–211 (DFAKEGNSSMYLGTLHTIA). The helical transmembrane segment at 212–232 (MIGPILGFIMSSVFAKLYVDV) threads the bilayer. Residues 233 to 250 (GYVDLRSVRITPQDARWV) lie on the Extracellular side of the membrane. A helical membrane pass occupies residues 251 to 275 (GAWWLGFIVNGLLCIICSIPFFFLP). Residues 276 to 326 (KIPKRSQKERKNSASLHVLKTDEDKNPVTNPTTQEKQAPANLTGFLWSLRS) lie on the Cytoplasmic side of the membrane. Phosphoserine is present on residues serine 288 and serine 290. Residues 327–348 (ILTNEQYVIFLILTLLQISSFI) traverse the membrane as a helical segment. Residues 349-368 (GSFTYLFKFIEQQFGQTASQ) lie on the Extracellular side of the membrane. A helical transmembrane segment spans residues 369–392 (ANFLLGVITIPTMASGMFLGGYLI). The Cytoplasmic segment spans residues 393-396 (KRLK). Residues 397–420 (LTLLGITKFVFFTTTMAYVFYLSY) form a helical membrane-spanning segment. Over 421 to 533 (FLLICENKAF…DKCKTKYYFY (113 aa)) the chain is Extracellular. The 58-residue stretch at 448 to 505 (DVPLSYCNSDCICDKNQWEPVCGENGVTYISPCLAGCKSFRGDKKLMNIEFYDCSCVS) folds into the Kazal-like domain. 3 disulfide bridges follow: cysteine 454–cysteine 484, cysteine 460–cysteine 480, and cysteine 469–cysteine 503. An N-linked (GlcNAc...) asparagine glycan is attached at asparagine 513. Residues 534–556 (ITFQVIISFFTALGSTSLMLILI) form a helical membrane-spanning segment. The Cytoplasmic segment spans residues 557–565 (RSVQPELKS). A helical membrane pass occupies residues 566 to 591 (LGMGFHSLVVRTLGGILAPVYYGALI). Residues 592 to 625 (DRTCMKWSVTSCGARGACRLYNSRLFGMIYVGLS) are Extracellular-facing. A helical transmembrane segment spans residues 626 to 643 (IALKTPILLLYVALIYVM). Residues 644 to 689 (KRKMKRNDNKILENGRKFTDEGNPEPVNNNGYSCVPSDEKNSETPL) are Cytoplasmic-facing. The interval 658–689 (GRKFTDEGNPEPVNNNGYSCVPSDEKNSETPL) is disordered. Residue threonine 662 is modified to Phosphothreonine. Serine 680 carries the phosphoserine modification. The segment covering 680–689 (SDEKNSETPL) has biased composition (basic and acidic residues).

The protein belongs to the organo anion transporter (TC 2.A.60) family. Liver specific.

The protein resides in the cell membrane. The enzyme catalyses estrone 3-sulfate(out) = estrone 3-sulfate(in). It carries out the reaction taurocholate(out) = taurocholate(in). The catalysed reaction is prostaglandin E2(out) = prostaglandin E2(in). It catalyses the reaction L-thyroxine(out) = L-thyroxine(in). Functionally, mediates the Na(+)-independent uptake of organic anions such as taurochlate, bromosulfophthalein and steroid conjugates (estrone 3-sulfate, 17-beta-glucuronosyl estradiol, dehydroepiandrosterone sulfate). Also transports prostaglandin E2 and L-thyroxine (T4). Shows a pH-sensitive substrate specificity which may be ascribed to the protonation state of the binding site and leads to a stimulation of substrate transport in an acidic microenvironment. Hydrogencarbonate/HCO3(-) acts as the probable counteranion that exchanges for organic anions. This is Solute carrier organic anion transporter family member 1B2 (Slco1b2) from Mus musculus (Mouse).